Reading from the N-terminus, the 218-residue chain is Small ribosomal subunit protein uS3c (218 aa).

Residues 47–118 (VQKNIRISSG…KLNIAITRIS (72 aa)) form the KH type-2 domain.

It belongs to the universal ribosomal protein uS3 family. As to quaternary structure, part of the 30S ribosomal subunit.

The protein resides in the plastid. It localises to the chloroplast. This chain is Small ribosomal subunit protein uS3c (rps3), found in Crucihimalaya wallichii (Rock-cress).